We begin with the raw amino-acid sequence, 648 residues long: Bifunctional protein TilS/HprT (648 aa).

29-34 (SGGPDS) lines the ATP pocket. Aspartate 627 lines the Mg(2+) pocket.

The protein in the N-terminal section; belongs to the tRNA(Ile)-lysidine synthase family. This sequence in the C-terminal section; belongs to the purine/pyrimidine phosphoribosyltransferase family. It depends on Mg(2+) as a cofactor.

The protein resides in the cytoplasm. The enzyme catalyses IMP + diphosphate = hypoxanthine + 5-phospho-alpha-D-ribose 1-diphosphate. It catalyses the reaction GMP + diphosphate = guanine + 5-phospho-alpha-D-ribose 1-diphosphate. The catalysed reaction is cytidine(34) in tRNA(Ile2) + L-lysine + ATP = lysidine(34) in tRNA(Ile2) + AMP + diphosphate + H(+). In terms of biological role, ligates lysine onto the cytidine present at position 34 of the AUA codon-specific tRNA(Ile) that contains the anticodon CAU, in an ATP-dependent manner. Cytidine is converted to lysidine, thus changing the amino acid specificity of the tRNA from methionine to isoleucine. The chain is Bifunctional protein TilS/HprT (tilS/hprT) from Listeria innocua serovar 6a (strain ATCC BAA-680 / CLIP 11262).